An 856-amino-acid chain; its full sequence is Alanine/arginine aminopeptidase (856 aa).

Substrate contacts are provided by residues Glu-132 and 264-268 (GAMEN). His-300 is a binding site for Zn(2+). Catalysis depends on Glu-301, which acts as the Proton acceptor. His-304 and Glu-323 together coordinate Zn(2+).

This sequence belongs to the peptidase M1 family. It depends on Zn(2+) as a cofactor.

Its function is as follows. Positive effector of glycogen accumulation. May be involved in nutrient-sensing. The sequence is that of Alanine/arginine aminopeptidase (AAP1) from Saccharomyces cerevisiae (strain ATCC 204508 / S288c) (Baker's yeast).